Reading from the N-terminus, the 456-residue chain is Transforming growth factor beta-1-induced transcript 1 protein (456 aa).

An N-acetylmethionine modification is found at methionine 1. The segment at methionine 1–glycine 79 is disordered. Residues methionine 1–serine 195 are transcription activation. The interval methionine 1–valine 235 is interaction with PTK2B/PYK2. Residues aspartate 3–threonine 15 carry the LD motif 1 motif. Threonine 33 carries the post-translational modification Phosphothreonine. Tyrosine 55 carries the post-translational modification Phosphotyrosine. The residue at position 63 (serine 63) is a Phosphoserine. An interaction with PTK2/FAK1 region spans residues cysteine 78 to proline 131. The LD motif 2 motif lies at glutamate 87–glutamine 99. The interval glutamine 109–alanine 146 is disordered. Residues threonine 116–arginine 130 show a composition bias toward basic and acidic residues. Residues serine 132, serine 136, serine 138, serine 159, serine 181, and serine 189 each carry the phosphoserine modification. Residues serine 132 to proline 142 show a composition bias toward pro residues. Residues glutamate 152–phenylalanine 163 carry the LD motif 3 motif. The tract at residues glutamine 166–aspartate 200 is disordered. The short motif at serine 198–leucine 210 is the LD motif 4 element. LIM zinc-binding domains lie at glycine 221–proline 280, arginine 281–alanine 338, proline 339–serine 398, and leucine 399–glycine 456. Serine 398 is modified (phosphoserine). Threonine 402 is subject to Phosphothreonine.

It belongs to the paxillin family. As to quaternary structure, homooligomer. Interacts with CRIP2, HSPB1, ILK, LIMS1, LIMS2, NCK2, NUDT16L1, PAK, PPARG, PTPN12, TCF3, TCF7L2 and VCL. Forms a complex with GIT1 and ARHGEF7. Interacts with AR/androgen receptor in a ligand-dependent manner. Interacts with CSK, LYN, MAPK15, NR3C1, PPARG, PTK2/FAK1, PTK2B/PYK2, SLC6A3, SLC6A4, SMAD3, SRC and talin. Interacts (via LIM zinc-binding domain 2) with CBLC (via RING-type zinc finger); the interaction is direct and enhances CBLC E3 ubiquitin-protein ligase activity. Phosphorylated by gonadotropin-releasing hormone-activated SRC.

It is found in the cell junction. Its subcellular location is the focal adhesion. It localises to the nucleus matrix. The protein localises to the cytoplasm. The protein resides in the cytoskeleton. Its function is as follows. Functions as a molecular adapter coordinating multiple protein-protein interactions at the focal adhesion complex and in the nucleus. Links various intracellular signaling modules to plasma membrane receptors and regulates the Wnt and TGFB signaling pathways. May also regulate SLC6A3 and SLC6A4 targeting to the plasma membrane hence regulating their activity. In the nucleus, functions as a nuclear receptor coactivator regulating glucocorticoid, androgen, mineralocorticoid and progesterone receptor transcriptional activity. May play a role in the processes of cell growth, proliferation, migration, differentiation and senescence. May have a zinc-dependent DNA-binding activity. This chain is Transforming growth factor beta-1-induced transcript 1 protein (TGFB1I1), found in Bos taurus (Bovine).